The sequence spans 372 residues: Septin-1 (372 aa).

Residues 27–301 form the Septin-type G domain; it reads KGFDFTLMVA…EGYRARCLQS (275 aa). The tract at residues 37–44 is G1 motif; it reads GESGLGKS. Residues 37–44, Thr-71, Gly-97, and 176–184 each bind GTP; these read GESGLGKS and KADALMPQE. The tract at residues 94-97 is G3 motif; sequence DTPG. The tract at residues 175-178 is G4 motif; the sequence is GKAD. Ser-211 bears the Phosphoserine mark. The GTP site is built by Gly-234 and Arg-250. Position 253 is a phosphoserine; by AURKB (Ser-253). Thr-256 is subject to Phosphothreonine. Phosphoserine; by AURKB occurs at positions 312 and 320. A disordered region spans residues 352-372; the sequence is LEKMQAQMQQSQAQGEQSDAL. A compositionally biased stretch (low complexity) spans 355 to 372; the sequence is MQAQMQQSQAQGEQSDAL.

The protein belongs to the TRAFAC class TrmE-Era-EngA-EngB-Septin-like GTPase superfamily. Septin GTPase family. Septins polymerize into heterooligomeric protein complexes that form filaments, and can associate with cellular membranes, actin filaments and microtubules. GTPase activity is required for filament formation. Interacts with AURKB. Expressed at high levels in lymphoid and hematopoietic tissues.

It is found in the cytoplasm. The protein localises to the cytoskeleton. Its subcellular location is the microtubule organizing center. The protein resides in the centrosome. It localises to the midbody. In terms of biological role, filament-forming cytoskeletal GTPase. May play a role in cytokinesis (Potential). This Homo sapiens (Human) protein is Septin-1.